An 839-amino-acid chain; its full sequence is AMP deaminase (839 aa).

Residues Leu-8–Phe-28 traverse the membrane as a helical segment. Positions Glu-40 to Glu-167 are disordered. The segment covering Asp-85 to Thr-94 has biased composition (gly residues). Residues Ser-134 and Ser-140 each carry the phosphoserine modification. Residues Ser-153–Asn-162 show a composition bias toward acidic residues. A Phosphoserine modification is found at Ser-203. Ala-289 to Ser-296 is a binding site for ATP. Positions 391 and 393 each coordinate Zn(2+). Residues His-393 and Lys-462–Tyr-467 contribute to the substrate site. Residue His-659 coordinates Zn(2+). Glu-662 lines the substrate pocket. The active-site Proton acceptor is the His-681. Asp-736 is a binding site for Zn(2+). Asp-737–Gln-740 lines the substrate pocket.

Belongs to the metallo-dependent hydrolases superfamily. Adenosine and AMP deaminases family. In terms of assembly, homodimer. Interacts with AHK4. Interacts with EER5. The cofactor is Zn(2+). In terms of tissue distribution, expressed in seedlings, roots, leaves, flowers, pollen grains, pollen tubes and siliques, and at a lower level in stems.

The protein localises to the membrane. The protein resides in the microsome membrane. The catalysed reaction is AMP + H2O + H(+) = IMP + NH4(+). The protein operates within purine metabolism; IMP biosynthesis via salvage pathway; IMP from AMP: step 1/1. With respect to regulation, activated by ATP. Activated by sulfate ions (in vitro). Inhibited by phosphate ions. Its function is as follows. AMP deaminase plays a critical role in energy metabolism. Essential for the transition from zygote to embryo. The polypeptide is AMP deaminase (Arabidopsis thaliana (Mouse-ear cress)).